An 872-amino-acid polypeptide reads, in one-letter code: DNA mismatch repair protein MutS (872 aa).

602–609 (GPNMSGKS) contacts ATP.

It belongs to the DNA mismatch repair MutS family.

Its function is as follows. This protein is involved in the repair of mismatches in DNA. It is possible that it carries out the mismatch recognition step. This protein has a weak ATPase activity. The chain is DNA mismatch repair protein MutS from Staphylococcus aureus (strain Mu3 / ATCC 700698).